The primary structure comprises 391 residues: Polyketide synthase 5 (391 aa).

Cysteine 164 is an active-site residue.

The protein belongs to the thiolase-like superfamily. Chalcone/stilbene synthases family. Homodimer. In terms of tissue distribution, expressed in fruits.

It catalyses the reaction (E)-4-coumaroyl-CoA + 3 malonyl-CoA + 3 H(+) = 2',4,4',6'-tetrahydroxychalcone + 3 CO2 + 4 CoA. It functions in the pathway secondary metabolite biosynthesis; flavonoid biosynthesis. Functionally, polyketide synthase producing naringenin chalcone. Can use p-coumaryl-CoA as substrate. This chain is Polyketide synthase 5 (PKS5), found in Rubus idaeus (Raspberry).